The sequence spans 368 residues: Alanine racemase 3 (368 aa).

K42 acts as the Proton acceptor; specific for D-alanine in catalysis. K42 carries the N6-(pyridoxal phosphate)lysine modification. Residue R141 coordinates substrate. Catalysis depends on Y262, which acts as the Proton acceptor; specific for L-alanine. Residue M310 coordinates substrate.

It belongs to the alanine racemase family. Pyridoxal 5'-phosphate serves as cofactor.

The catalysed reaction is L-alanine = D-alanine. It participates in amino-acid biosynthesis; D-alanine biosynthesis; D-alanine from L-alanine: step 1/1. In terms of biological role, catalyzes the interconversion of L-alanine and D-alanine. May also act on other amino acids. The chain is Alanine racemase 3 (alr3) from Salmonella typhi.